The sequence spans 189 residues: UPF0301 protein PLES_04031 (189 aa).

Belongs to the UPF0301 (AlgH) family.

This Pseudomonas aeruginosa (strain LESB58) protein is UPF0301 protein PLES_04031.